The primary structure comprises 249 residues: Homeobox protein TGIF2LX (249 aa).

2 disordered regions span residues 1–65 and 126–199; these read MEAA…GYSP and DPIV…PKKK. Residues 9–27 show a composition bias toward basic and acidic residues; the sequence is AETRSRVEKDSRRAIKDSP. The segment covering 28–46 has biased composition (polar residues); the sequence is AKTQSPAQDTSIMLRNNAD. The homeobox; TALE-type DNA-binding region spans 55 to 118; sequence EHKKKRKGYS…INARRRILPD (64 aa). The segment covering 159-172 has biased composition (polar residues); the sequence is DNVQSLPLRSSPKG.

Belongs to the TALE/TGIF homeobox family.

Its subcellular location is the nucleus. May have a transcription role in testis. The sequence is that of Homeobox protein TGIF2LX (TGIF2LX) from Macaca mulatta (Rhesus macaque).